Consider the following 433-residue polypeptide: Dihydroorotase (433 aa).

Zn(2+)-binding residues include His-63 and His-65. Residues 65 to 67 (HLR) and Asn-97 each bind substrate. Positions 155, 182, and 235 each coordinate Zn(2+). Asn-283 serves as a coordination point for substrate. Position 310 (Asp-310) interacts with Zn(2+). Asp-310 is a catalytic residue. Position 314 (His-314) interacts with substrate.

This sequence belongs to the metallo-dependent hydrolases superfamily. DHOase family. Class I DHOase subfamily. Zn(2+) serves as cofactor.

It carries out the reaction (S)-dihydroorotate + H2O = N-carbamoyl-L-aspartate + H(+). It participates in pyrimidine metabolism; UMP biosynthesis via de novo pathway; (S)-dihydroorotate from bicarbonate: step 3/3. Functionally, catalyzes the reversible cyclization of carbamoyl aspartate to dihydroorotate. The chain is Dihydroorotase from Anaeromyxobacter sp. (strain K).